The following is a 313-amino-acid chain: S-methyl-5'-thioadenosine phosphorylase (313 aa).

Residues threonine 20, 68–69 (RH), and 101–102 (SA) each bind phosphate. Methionine 203 is a binding site for substrate. Serine 204 lines the phosphate pocket. Substrate is bound at residue 227–229 (DYD).

The protein belongs to the PNP/MTAP phosphorylase family. MTAP subfamily. In terms of assembly, homotrimer.

The protein resides in the cytoplasm. It localises to the nucleus. The enzyme catalyses S-methyl-5'-thioadenosine + phosphate = 5-(methylsulfanyl)-alpha-D-ribose 1-phosphate + adenine. It functions in the pathway amino-acid biosynthesis; L-methionine biosynthesis via salvage pathway; S-methyl-5-thio-alpha-D-ribose 1-phosphate from S-methyl-5'-thioadenosine (phosphorylase route): step 1/1. Its function is as follows. Catalyzes the reversible phosphorylation of S-methyl-5'-thioadenosine (MTA) to adenine and 5-methylthioribose-1-phosphate. Involved in the breakdown of MTA, a major by-product of polyamine biosynthesis. Responsible for the first step in the methionine salvage pathway after MTA has been generated from S-adenosylmethionine. Has broad substrate specificity with 6-aminopurine nucleosides as preferred substrates. This chain is S-methyl-5'-thioadenosine phosphorylase, found in Ajellomyces capsulatus (strain G186AR / H82 / ATCC MYA-2454 / RMSCC 2432) (Darling's disease fungus).